Consider the following 428-residue polypeptide: Glutamate-1-semialdehyde 2,1-aminomutase 1 (428 aa).

Lysine 267 bears the N6-(pyridoxal phosphate)lysine mark.

It belongs to the class-III pyridoxal-phosphate-dependent aminotransferase family. HemL subfamily. As to quaternary structure, homodimer. Pyridoxal 5'-phosphate is required as a cofactor.

It localises to the cytoplasm. It catalyses the reaction (S)-4-amino-5-oxopentanoate = 5-aminolevulinate. It functions in the pathway porphyrin-containing compound metabolism; protoporphyrin-IX biosynthesis; 5-aminolevulinate from L-glutamyl-tRNA(Glu): step 2/2. The polypeptide is Glutamate-1-semialdehyde 2,1-aminomutase 1 (Staphylococcus aureus (strain Mu3 / ATCC 700698)).